Reading from the N-terminus, the 248-residue chain is Isoprenyl transferase (248 aa).

Asp-23 is an active-site residue. Asp-23 is a Mg(2+) binding site. Substrate-binding positions include 24–27 (GNGR), Trp-28, Arg-36, His-40, and 68–70 (STE). Catalysis depends on Asn-71, which acts as the Proton acceptor. Residues Trp-72, Arg-74, Arg-185, and 191-193 (RIS) each bind substrate. Residue Glu-204 participates in Mg(2+) binding.

It belongs to the UPP synthase family. As to quaternary structure, homodimer. Mg(2+) is required as a cofactor.

Functionally, catalyzes the condensation of isopentenyl diphosphate (IPP) with allylic pyrophosphates generating different type of terpenoids. This chain is Isoprenyl transferase, found in Neisseria meningitidis serogroup B (strain ATCC BAA-335 / MC58).